The following is a 371-amino-acid chain: Chorismate synthase (371 aa).

Residues Arg48 and Arg54 each coordinate NADP(+). Residues 130–132 (RSS), 242–243 (NA), Gly287, 302–306 (KPTSS), and Arg328 each bind FMN.

This sequence belongs to the chorismate synthase family. In terms of assembly, homotetramer. It depends on FMNH2 as a cofactor.

It catalyses the reaction 5-O-(1-carboxyvinyl)-3-phosphoshikimate = chorismate + phosphate. It functions in the pathway metabolic intermediate biosynthesis; chorismate biosynthesis; chorismate from D-erythrose 4-phosphate and phosphoenolpyruvate: step 7/7. Functionally, catalyzes the anti-1,4-elimination of the C-3 phosphate and the C-6 proR hydrogen from 5-enolpyruvylshikimate-3-phosphate (EPSP) to yield chorismate, which is the branch point compound that serves as the starting substrate for the three terminal pathways of aromatic amino acid biosynthesis. This reaction introduces a second double bond into the aromatic ring system. This is Chorismate synthase from Azorhizobium caulinodans (strain ATCC 43989 / DSM 5975 / JCM 20966 / LMG 6465 / NBRC 14845 / NCIMB 13405 / ORS 571).